The following is a 103-amino-acid chain: uncharacterized protein (103 aa).

This is an uncharacterized protein from Acanthamoeba polyphaga mimivirus (APMV).